A 132-amino-acid polypeptide reads, in one-letter code: Histone H2A.1 (132 aa).

This sequence belongs to the histone H2A family. The nucleosome is a histone octamer containing two molecules each of H2A, H2B, H3 and H4 assembled in one H3-H4 heterotetramer and two H2A-H2B heterodimers. The octamer wraps approximately 147 bp of DNA.

Its subcellular location is the nucleus. It is found in the chromosome. In terms of biological role, core component of nucleosome. Nucleosomes wrap and compact DNA into chromatin, limiting DNA accessibility to the cellular machineries which require DNA as a template. Histones thereby play a central role in transcription regulation, DNA repair, DNA replication and chromosomal stability. DNA accessibility is regulated via a complex set of post-translational modifications of histones, also called histone code, and nucleosome remodeling. This Leishmania infantum protein is Histone H2A.1.